A 246-amino-acid chain; its full sequence is NADH-quinone oxidoreductase subunit C (246 aa).

Belongs to the complex I 30 kDa subunit family. In terms of assembly, NDH-1 is composed of 14 different subunits. Subunits NuoB, C, D, E, F, and G constitute the peripheral sector of the complex.

It is found in the cell inner membrane. The enzyme catalyses a quinone + NADH + 5 H(+)(in) = a quinol + NAD(+) + 4 H(+)(out). Its function is as follows. NDH-1 shuttles electrons from NADH, via FMN and iron-sulfur (Fe-S) centers, to quinones in the respiratory chain. The immediate electron acceptor for the enzyme in this species is believed to be ubiquinone. Couples the redox reaction to proton translocation (for every two electrons transferred, four hydrogen ions are translocated across the cytoplasmic membrane), and thus conserves the redox energy in a proton gradient. The chain is NADH-quinone oxidoreductase subunit C from Halorhodospira halophila (strain DSM 244 / SL1) (Ectothiorhodospira halophila (strain DSM 244 / SL1)).